Here is a 917-residue protein sequence, read N- to C-terminus: Translation initiation factor IF-2 (917 aa).

Disordered regions lie at residues 1 to 84 (MSDG…GRAG) and 150 to 318 (KESE…DRER). A compositionally biased stretch (polar residues) spans 10 to 27 (DGNNTPSQGGEQTRSSRL). Composition is skewed to low complexity over residues 69–84 (AAGPGAGAAARGGRAG), 154–177 (QQAAREQAAAEAAARAAEQAAAEA), and 227–236 (SRPAAAAPAR). The span at 265-274 (GAPPAPPRRP) shows a compositional bias: pro residues. Positions 282-305 (GGSDRRSGRIDVRAAIEGDDDKTR) are enriched in basic and acidic residues. A tr-type G domain is found at 416–586 (PRAPVVTVMG…LLQSEMLDLK (171 aa)). Residues 425–432 (GHVDHGKT) form a G1 region. 425–432 (GHVDHGKT) is a GTP binding site. A G2 region spans residues 450 to 454 (GITQH). The segment at 472 to 475 (DTPG) is G3. GTP is bound by residues 472 to 476 (DTPGH) and 526 to 529 (NKID). The segment at 526–529 (NKID) is G4. A G5 region spans residues 562-564 (SAL).

Belongs to the TRAFAC class translation factor GTPase superfamily. Classic translation factor GTPase family. IF-2 subfamily.

The protein localises to the cytoplasm. Functionally, one of the essential components for the initiation of protein synthesis. Protects formylmethionyl-tRNA from spontaneous hydrolysis and promotes its binding to the 30S ribosomal subunits. Also involved in the hydrolysis of GTP during the formation of the 70S ribosomal complex. This is Translation initiation factor IF-2 from Gluconobacter oxydans (strain 621H) (Gluconobacter suboxydans).